We begin with the raw amino-acid sequence, 146 residues long: 3-dehydroquinate dehydratase (146 aa).

Catalysis depends on Y23, which acts as the Proton acceptor. Positions 74, 80, and 87 each coordinate substrate. H100 functions as the Proton donor in the catalytic mechanism. Substrate-binding positions include 101–102 (IS) and R111.

It belongs to the type-II 3-dehydroquinase family. Homododecamer.

The enzyme catalyses 3-dehydroquinate = 3-dehydroshikimate + H2O. It functions in the pathway metabolic intermediate biosynthesis; chorismate biosynthesis; chorismate from D-erythrose 4-phosphate and phosphoenolpyruvate: step 3/7. In terms of biological role, catalyzes a trans-dehydration via an enolate intermediate. This chain is 3-dehydroquinate dehydratase, found in Bacillus cereus (strain ATCC 14579 / DSM 31 / CCUG 7414 / JCM 2152 / NBRC 15305 / NCIMB 9373 / NCTC 2599 / NRRL B-3711).